Here is a 472-residue protein sequence, read N- to C-terminus: MKNTVWGPPEMRRIRRIHFVGIGGSGMCGIAEVLLNQGYEISGSDLKESATTRRLSDMGASITFGHTAQNIAGANVVVTSSAVAKDNPEVTAANEQRIPVIARAEMLAELMRYRHGVAIAGTHGKTTTTSLMASVLGEAGLDPTFVIGGRLNSAGTNAKLGASRYLVAEADESDASFLHLTPMVSVVTNIDADHMHTYGGDFEKLKQTFVDFLHNLPFYGVAVMCYDDPVVREIIPRVGRSVITYGFNEKADVRAVDIAQQGMQTSFTAKRPGGHPDLRISLNMPGKHNVLNALAVIAVATDEGIADEAIVSALNKFQGVGRRFQVYGNYPVDEGSVMLVDDYGHHPREVDATIKAIRDGWPEKRLVAVFQPHRYTRTRDLYEDFVQVLSKVDVLVLMDVYPAGEKEIPGADGRSLCRSIRQRGQLDPIFIERGQDVKAVLSGVLQDGDLLLTQGAGDIGAVAGVLAEGGLQ.

121-127 serves as a coordination point for ATP; it reads GTHGKTT.

It belongs to the MurCDEF family.

It is found in the cytoplasm. The enzyme catalyses UDP-N-acetyl-alpha-D-muramate + L-alanine + ATP = UDP-N-acetyl-alpha-D-muramoyl-L-alanine + ADP + phosphate + H(+). It functions in the pathway cell wall biogenesis; peptidoglycan biosynthesis. Functionally, cell wall formation. In Hahella chejuensis (strain KCTC 2396), this protein is UDP-N-acetylmuramate--L-alanine ligase.